Consider the following 458-residue polypeptide: Transcription factor verZ (458 aa).

Positions 117–144 form a DNA-binding region, zn(2)-C6 fungal-type; the sequence is CDRCQAAKVKCGHEKPSCRRCTYHKVEC. Disordered regions lie at residues 153–256 and 435–458; these read GRPR…MQSM and MEEE…EDGK. Polar residues-rich tracts occupy residues 167-186, 193-207, and 223-235; these read PSPQ…SKSA, FTGT…QSPV, and RAEP…TTNF.

The protein resides in the nucleus. Functionally, transcription factor; part of the gene cluster that mediates the biosynthesis of 11'-deoxyverticillin A, one of the dimeric epipolythiodioxopiperazines (ETPs) from the verticillin family that act as mycotoxins. 11'-deoxyverticillin A is required for normal conidiation. Directly binds the consensus motif 5'-(T/C)(C/A)(G/T)GN3CC(G/T)(A/G)(G/C)-3' localized in the upstream regions of the verticillin biosynthetic genes. In Clonostachys rogersoniana, this protein is Transcription factor verZ.